Consider the following 160-residue polypeptide: Suppressyn (160 aa).

A signal peptide spans M1–A39. Positions A137–L160 are disordered.

As to quaternary structure, interacts (secreted) with SLC1A5; mainly at cell surface. As to expression, specifically expressed in placenta by extravillous trophoblasts and syncytiotrophoblasts (at protein level).

The protein resides in the secreted. In terms of biological role, may play a role in trophoblasts syncytialization, the spontaneous fusion of their plasma membranes, an essential process in placental development. May negatively regulate cell-cell fusion by interacting with SLC1A5, the probable receptor on the cell surface of the fusogenic syncytin-1/ERVW-1. The protein is Suppressyn (ERVH48-1) of Homo sapiens (Human).